The chain runs to 711 residues: DNA topoisomerase 1 (711 aa).

One can recognise a Toprim domain in the interval Lys3–Ile134. Glu9 and Asp102 together coordinate Mg(2+). The Topo IA-type catalytic domain occupies Asp150–Lys604. The segment at Ser183–Gln188 is interaction with DNA. Tyr340 acts as the O-(5'-phospho-DNA)-tyrosine intermediate in catalysis. 2 C4-type zinc fingers span residues Cys624–Cys652 and Cys673–Cys702.

Belongs to the type IA topoisomerase family. As to quaternary structure, monomer. Mg(2+) is required as a cofactor.

It carries out the reaction ATP-independent breakage of single-stranded DNA, followed by passage and rejoining.. In terms of biological role, releases the supercoiling and torsional tension of DNA, which is introduced during the DNA replication and transcription, by transiently cleaving and rejoining one strand of the DNA duplex. Introduces a single-strand break via transesterification at a target site in duplex DNA. The scissile phosphodiester is attacked by the catalytic tyrosine of the enzyme, resulting in the formation of a DNA-(5'-phosphotyrosyl)-enzyme intermediate and the expulsion of a 3'-OH DNA strand. The free DNA strand then undergoes passage around the unbroken strand, thus removing DNA supercoils. Finally, in the religation step, the DNA 3'-OH attacks the covalent intermediate to expel the active-site tyrosine and restore the DNA phosphodiester backbone. The chain is DNA topoisomerase 1 from Mycoplasma pneumoniae (strain ATCC 29342 / M129 / Subtype 1) (Mycoplasmoides pneumoniae).